The following is a 438-amino-acid chain: Ribosomal protein uS12 methylthiotransferase RimO (438 aa).

The 113-residue stretch at 6–118 (KQLCLISLGC…IDILIAKKQN (113 aa)) folds into the MTTase N-terminal domain. [4Fe-4S] cluster-binding residues include cysteine 15, cysteine 49, cysteine 81, cysteine 150, cysteine 154, and cysteine 157. Residues 136-364 (TGSSVHAYVK…NKIALKHQHN (229 aa)) enclose the Radical SAM core domain.

The protein belongs to the methylthiotransferase family. RimO subfamily. [4Fe-4S] cluster serves as cofactor.

It is found in the cytoplasm. The catalysed reaction is L-aspartate(89)-[ribosomal protein uS12]-hydrogen + (sulfur carrier)-SH + AH2 + 2 S-adenosyl-L-methionine = 3-methylsulfanyl-L-aspartate(89)-[ribosomal protein uS12]-hydrogen + (sulfur carrier)-H + 5'-deoxyadenosine + L-methionine + A + S-adenosyl-L-homocysteine + 2 H(+). In terms of biological role, catalyzes the methylthiolation of an aspartic acid residue of ribosomal protein uS12. The chain is Ribosomal protein uS12 methylthiotransferase RimO from Helicobacter acinonychis (strain Sheeba).